The sequence spans 258 residues: Imidazole glycerol phosphate synthase subunit HisF (258 aa).

Residues D11 and D130 contribute to the active site.

The protein belongs to the HisA/HisF family. Heterodimer of HisH and HisF.

The protein localises to the cytoplasm. The catalysed reaction is 5-[(5-phospho-1-deoxy-D-ribulos-1-ylimino)methylamino]-1-(5-phospho-beta-D-ribosyl)imidazole-4-carboxamide + L-glutamine = D-erythro-1-(imidazol-4-yl)glycerol 3-phosphate + 5-amino-1-(5-phospho-beta-D-ribosyl)imidazole-4-carboxamide + L-glutamate + H(+). Its pathway is amino-acid biosynthesis; L-histidine biosynthesis; L-histidine from 5-phospho-alpha-D-ribose 1-diphosphate: step 5/9. Functionally, IGPS catalyzes the conversion of PRFAR and glutamine to IGP, AICAR and glutamate. The HisF subunit catalyzes the cyclization activity that produces IGP and AICAR from PRFAR using the ammonia provided by the HisH subunit. This chain is Imidazole glycerol phosphate synthase subunit HisF, found in Cronobacter sakazakii (strain ATCC BAA-894) (Enterobacter sakazakii).